A 219-amino-acid polypeptide reads, in one-letter code: 3,4-dihydroxy-2-butanone 4-phosphate synthase (219 aa).

Residues 37-38, D42, 150-154, and E174 each bind D-ribulose 5-phosphate; these read RE and RRGHT. E38 lines the Mg(2+) pocket. A Mg(2+)-binding site is contributed by H153.

This sequence belongs to the DHBP synthase family. In terms of assembly, homodimer. The cofactor is Mg(2+). Requires Mn(2+) as cofactor.

It catalyses the reaction D-ribulose 5-phosphate = (2S)-2-hydroxy-3-oxobutyl phosphate + formate + H(+). Its pathway is cofactor biosynthesis; riboflavin biosynthesis; 2-hydroxy-3-oxobutyl phosphate from D-ribulose 5-phosphate: step 1/1. Its function is as follows. Catalyzes the conversion of D-ribulose 5-phosphate to formate and 3,4-dihydroxy-2-butanone 4-phosphate. This Edwardsiella ictaluri (strain 93-146) protein is 3,4-dihydroxy-2-butanone 4-phosphate synthase.